We begin with the raw amino-acid sequence, 501 residues long: Pentatricopeptide repeat-containing protein At4g16470 (501 aa).

8 PPR repeats span residues glutamate 107–leucine 141, asparagine 142–arginine 172, aspartate 173–proline 207, aspartate 208–serine 242, asparagine 243–arginine 273, asparagine 274–proline 308, asparagine 309–proline 344, and glutamate 345–proline 379. The type E motif stretch occupies residues valine 380–glutamine 455. The segment at glycine 456–methionine 486 is type E(+) motif.

It belongs to the PPR family. PCMP-E subfamily.

The protein is Pentatricopeptide repeat-containing protein At4g16470 (PCMP-E12) of Arabidopsis thaliana (Mouse-ear cress).